Reading from the N-terminus, the 1278-residue chain is ABC transporter B family member 11 (1278 aa).

2 stretches are compositionally biased toward basic and acidic residues: residues 1-13 (MNGD…DSVS) and 21-35 (SPKE…EKSE). The interval 1-35 (MNGDGAREGDSVSHEPSTSKSPKEGEETKKEEKSE) is disordered. Helical transmembrane passes span 55 to 75 (VLLM…LPFM), 106 to 126 (FVYL…CWMI), 182 to 202 (FIQL…KGWL), 205 to 225 (LVML…ALIV), 285 to 305 (GLGL…AIWF), and 314 to 334 (GYTG…SMSL). The ABC transmembrane type-1 1 domain occupies 58–346 (MICGSIGAIG…TSPCVTAFAA (289 aa)). The 237-residue stretch at 381-617 (IELKDVHFSY…SEGAYSQLIR (237 aa)) folds into the ABC transporter 1 domain. An ATP-binding site is contributed by 416 to 423 (GESGSGKS). N-linked (GlcNAc...) asparagine glycosylation is found at N483, N568, and N653. Residues 629–654 (ELSSGSSFRNSNLKKSMEGTSSVGNS) are compositionally biased toward polar residues. Residues 629 to 656 (ELSSGSSFRNSNLKKSMEGTSSVGNSSR) form a disordered region. Residues 710–997 (LLLGTVAAAI…SSTFAPDSSK (288 aa)) form the ABC transmembrane type-1 2 domain. 2 consecutive transmembrane segments (helical) span residues 711–731 (LLGT…GILI) and 751–771 (FWAI…PTQM). Residue N806 is glycosylated (N-linked (GlcNAc...) asparagine). 4 consecutive transmembrane segments (helical) span residues 824-844 (ALVG…ASGL), 845-865 (IIAF…LPLI), 932-952 (GFIS…VYAT), and 971-991 (VFQV…SSTF). The 240-residue stretch at 1032–1271 (IELRHLSFTY…EGGVYASLVQ (240 aa)) folds into the ABC transporter 2 domain. An ATP-binding site is contributed by 1067–1074 (GESGSGKS). N-linked (GlcNAc...) asparagine glycosylation is found at N1121 and N1222.

It belongs to the ABC transporter superfamily. ABCB family. Multidrug resistance exporter (TC 3.A.1.201) subfamily. As to expression, present in roots and flower buds.

Its subcellular location is the membrane. The enzyme catalyses (indol-3-yl)acetate(in) + ATP + H2O = (indol-3-yl)acetate(out) + ADP + phosphate + H(+). In terms of biological role, involved in the regulation of auxin transport required for pistil elongation. The protein is ABC transporter B family member 11 of Arabidopsis thaliana (Mouse-ear cress).